Consider the following 197-residue polypeptide: Imidazoleglycerol-phosphate dehydratase (197 aa).

This sequence belongs to the imidazoleglycerol-phosphate dehydratase family.

The protein resides in the cytoplasm. The enzyme catalyses D-erythro-1-(imidazol-4-yl)glycerol 3-phosphate = 3-(imidazol-4-yl)-2-oxopropyl phosphate + H2O. It functions in the pathway amino-acid biosynthesis; L-histidine biosynthesis; L-histidine from 5-phospho-alpha-D-ribose 1-diphosphate: step 6/9. This Marinobacter nauticus (strain ATCC 700491 / DSM 11845 / VT8) (Marinobacter aquaeolei) protein is Imidazoleglycerol-phosphate dehydratase.